The primary structure comprises 649 residues: MISAAWSIFLIGTKIGLFLQVAPLSVMAKSCPSVCRCDAGFIYCNDRFLTSIPTGIPEDATTLYLQNNQINNAGIPSDLKNLLKVERIYLYHNSLDEFPTNLPKYVKELHLQENNIRTITYDSLSKIPYLEELHLDDNSVSAVSIEEGAFRDSNYLRLLFLSRNHLSTIPWGLPRTIEELRLDDNRISTISSPSLQGLTSLKRLVLDGNLLNNHGLGDKVFFNLVNLTELSLVRNSLTAAPVNLPGTNLRKLYLQDNHINRVPPNAFSYLRQLYRLDMSNNNLSNLPQGIFDDLDNITQLILRNNPWYCGCKMKWVRDWLQSLPVKVNVRGLMCQAPEKVRGMAIKDLNAELFDCKDSGIVSTIQITTAIPNTVYPAQGQWPAPVTKQPDIKNPKLTKDHQTTGSPSRKTITITVKSVTSDTIHISWKLALPMTALRLSWLKLGHSPAFGSITETIVTGERSEYLVTALEPDSPYKVCMVPMETSNLYLFDETPVCIETETAPLRMYNPTTTLNREQEKEPYKNPNLPLAAIIGGAVALVTIALLALVCWYVHRNGSLFSRNCAYSKGRRRKDDYAEAGTKKDNSILEIRETSFQMLPISNEPISKEEFVIHTIFPPNGMNLYKNNHSESSSNRSYRDSGIPDSDHSHS.

Residues 1–28 (MISAAWSIFLIGTKIGLFLQVAPLSVMA) form the signal peptide. In terms of domain architecture, LRRNT spans 29 to 58 (KSCPSVCRCDAGFIYCNDRFLTSIPTGIPE). The Extracellular portion of the chain corresponds to 29 to 528 (KSCPSVCRCD…KEPYKNPNLP (500 aa)). 2 cysteine pairs are disulfide-bonded: Cys-31/Cys-37 and Cys-35/Cys-44. Positions 38 to 67 (DAGFIYCNDRFLTSIPTGIPEDATTLYLQN) are interaction with ADGRL3. 10 LRR repeats span residues 59 to 80 (DATT…SDLK), 84 to 104 (KVER…NLPK), 105 to 126 (YVKE…SLSK), 129 to 150 (YLEE…EGAF), 155 to 175 (YLRL…GLPR), 176 to 197 (TIEE…SLQG), 200 to 220 (SLKR…GDKV), 226 to 247 (NLTE…LPGT), 248 to 269 (NLRK…AFSY), and 272 to 293 (QLYR…IFDD). The N-linked (GlcNAc...) asparagine glycan is linked to Asn-226. 2 N-linked (GlcNAc...) asparagine glycosylation sites follow: Asn-282 and Asn-296. One can recognise an LRRCT domain in the interval 305–357 (NPWYCGCKMKWVRDWLQSLPVKVNVRGLMCQAPEKVRGMAIKDLNAELFDCKD). Cys-309 and Cys-334 are joined by a disulfide. The segment at 387 to 407 (KQPDIKNPKLTKDHQTTGSPS) is disordered. The segment covering 389 to 401 (PDIKNPKLTKDHQ) has biased composition (basic and acidic residues). Residues 409–504 (KTITITVKSV…VCIETETAPL (96 aa)) enclose the Fibronectin type-III domain. A helical membrane pass occupies residues 529–549 (LAAIIGGAVALVTIALLALVC). At 550–649 (WYVHRNGSLF…GIPDSDHSHS (100 aa)) the chain is on the cytoplasmic side. The segment at 622-649 (LYKNNHSESSSNRSYRDSGIPDSDHSHS) is disordered.

In terms of assembly, monomer and homodimer. Self-associates (via leucine-rich repeats), giving rise to homooligomers. Interacts with FGFR1. Interacts (via extracellular domain) with ADGRL1/LPHN1 and LPHN2 (via olfactomedin-like domain). Interacts (via extracellular domain) with ADGRL3 (via olfactomedin-like domain); the interaction is direct. Interacts (via extracellular domain) with UNC5B and UNC5D (via extracellular domain); the interaction is direct. Identified in complexes composed of FLRT3, ADGRL3 and UNC5B, respectively FLRT3, ADGRL3 and UNC5D. May also interact (via extracellular domain) with UNC5A and UNC5C. Interacts (via cytoplasmic domain) with ROBO1. Post-translationally, N-glycosylated. Proteolytic cleavage in the juxtamembrane region gives rise to a soluble ectodomain. Cleavage is probably effected by a metalloprotease. Expressed in kidney, brain, pancreas, skeletal muscle, lung, liver, placenta, and heart.

It localises to the cell membrane. The protein localises to the presynaptic cell membrane. It is found in the endoplasmic reticulum membrane. The protein resides in the cell junction. Its subcellular location is the focal adhesion. It localises to the secreted. The protein localises to the cell projection. It is found in the axon. The protein resides in the growth cone membrane. Functionally, functions in cell-cell adhesion, cell migration and axon guidance, exerting an attractive or repulsive role depending on its interaction partners. Plays a role in the spatial organization of brain neurons. Plays a role in vascular development in the retina. Plays a role in cell-cell adhesion via its interaction with ADGRL3 and probably also other latrophilins that are expressed at the surface of adjacent cells. Interaction with the intracellular domain of ROBO1 mediates axon attraction towards cells expressing NTN1. Mediates axon growth cone collapse and plays a repulsive role in neuron guidance via its interaction with UNC5B, and possibly also other UNC-5 family members. Promotes neurite outgrowth (in vitro). Mediates cell-cell contacts that promote an increase both in neurite number and in neurite length. Plays a role in the regulation of the density of glutamaergic synapses. Plays a role in fibroblast growth factor-mediated signaling cascades. Required for normal morphogenesis during embryonic development, but not for normal embryonic patterning. Required for normal ventral closure, headfold fusion and definitive endoderm migration during embryonic development. Required for the formation of a normal basement membrane and the maintenance of a normal anterior visceral endoderm during embryonic development. The polypeptide is Leucine-rich repeat transmembrane protein FLRT3 (FLRT3) (Homo sapiens (Human)).